Here is a 310-residue protein sequence, read N- to C-terminus: Aspartate carbamoyltransferase catalytic subunit (310 aa).

Arg58 and Thr59 together coordinate carbamoyl phosphate. Lys86 is a binding site for L-aspartate. Arg108, His137, and Gln140 together coordinate carbamoyl phosphate. Positions 170 and 225 each coordinate L-aspartate. Carbamoyl phosphate contacts are provided by Gly264 and Pro265.

It belongs to the aspartate/ornithine carbamoyltransferase superfamily. ATCase family. As to quaternary structure, heterododecamer (2C3:3R2) of six catalytic PyrB chains organized as two trimers (C3), and six regulatory PyrI chains organized as three dimers (R2).

It catalyses the reaction carbamoyl phosphate + L-aspartate = N-carbamoyl-L-aspartate + phosphate + H(+). It functions in the pathway pyrimidine metabolism; UMP biosynthesis via de novo pathway; (S)-dihydroorotate from bicarbonate: step 2/3. Functionally, catalyzes the condensation of carbamoyl phosphate and aspartate to form carbamoyl aspartate and inorganic phosphate, the committed step in the de novo pyrimidine nucleotide biosynthesis pathway. The chain is Aspartate carbamoyltransferase catalytic subunit from Coxiella burnetii (strain CbuK_Q154) (Coxiella burnetii (strain Q154)).